The chain runs to 189 residues: Elongation factor P (189 aa).

It belongs to the elongation factor P family.

Its subcellular location is the cytoplasm. Its pathway is protein biosynthesis; polypeptide chain elongation. Its function is as follows. Involved in peptide bond synthesis. Stimulates efficient translation and peptide-bond synthesis on native or reconstituted 70S ribosomes in vitro. Probably functions indirectly by altering the affinity of the ribosome for aminoacyl-tRNA, thus increasing their reactivity as acceptors for peptidyl transferase. This is Elongation factor P from Chloroflexus aurantiacus (strain ATCC 29364 / DSM 637 / Y-400-fl).